A 53-amino-acid polypeptide reads, in one-letter code: Snake venom serine protease LmrSP-4 (53 aa).

The cysteines at positions 26 and 42 are disulfide-linked. His-41 functions as the Charge relay system in the catalytic mechanism.

Monomer. N-glycosylated. As to expression, expressed by the venom gland.

Its subcellular location is the secreted. Inhibited by the small molecule serine protease inhibitors phenylmethylsulfonyl fluoride (PMSF) and benzamidine. Functionally, snake venom serine protease that has fibrinogenolytic activity. Hydrolyzes the alpha-chain of fibrinogen (FGA), without affecting the beta- and the gamma-chains. Also displays hydrolytic activity towards S-2302 (plasma kallikrein substrate) and S-2251 (substrate for plasmin), but has no hydrolytic activity with S-2238 (thrombin substrate) or S-2222 (factor Xa). The protein is Snake venom serine protease LmrSP-4 of Lachesis muta rhombeata (Bushmaster).